The sequence spans 498 residues: Glycerol kinase (498 aa).

Threonine 13 contacts ADP. Residues threonine 13, threonine 14, and serine 15 each contribute to the ATP site. Threonine 13 is a sn-glycerol 3-phosphate binding site. Arginine 17 contacts ADP. The sn-glycerol 3-phosphate site is built by arginine 83, glutamate 84, tyrosine 135, and aspartate 244. Positions 83, 84, 135, 244, and 245 each coordinate glycerol. Residues threonine 266 and glycine 309 each contribute to the ADP site. 4 residues coordinate ATP: threonine 266, glycine 309, glutamine 313, and glycine 410. Residues glycine 410 and asparagine 414 each coordinate ADP.

It belongs to the FGGY kinase family. Homotetramer and homodimer (in equilibrium).

It carries out the reaction glycerol + ATP = sn-glycerol 3-phosphate + ADP + H(+). It functions in the pathway polyol metabolism; glycerol degradation via glycerol kinase pathway; sn-glycerol 3-phosphate from glycerol: step 1/1. Activated by phosphorylation and inhibited by fructose 1,6-bisphosphate (FBP). Key enzyme in the regulation of glycerol uptake and metabolism. Catalyzes the phosphorylation of glycerol to yield sn-glycerol 3-phosphate. The chain is Glycerol kinase from Symbiobacterium thermophilum (strain DSM 24528 / JCM 14929 / IAM 14863 / T).